The primary structure comprises 479 residues: Serine protease HTRA1A (479 aa).

Residues 1-18 (MILVTLFCICALVTSLQA) form the signal peptide. The 85-residue stretch at 27 to 111 (VIGGCPSHCD…RGKQGVCVCK (85 aa)) folds into the IGFBP N-terminal domain. 6 disulfide bridges follow: Cys-31–Cys-56, Cys-35–Cys-58, Cys-40–Cys-59, Cys-47–Cys-62, Cys-70–Cys-87, and Cys-81–Cys-108. A Kazal-like domain is found at 96–155 (SATVRRRGKQGVCVCKSSDPVCGSDGVSYRDICELKRVSNRAQSLQQPPVLFIQRGACGT). Residues 203–363 (GSGFVVSDDG…IPSDKIRQFL (161 aa)) form a serine protease region. Catalysis depends on charge relay system residues His-219, Asp-249, and Ser-327. Residues 364-466 (AESYDRLARG…LRVVVRRGNE (103 aa)) enclose the PDZ domain.

Belongs to the peptidase S1C family. As to quaternary structure, forms homotrimers. In the presence of substrate, may form higher-order multimers in a PDZ-independent manner.

Its subcellular location is the secreted. The protein resides in the cytoplasm. It localises to the cytosol. Functionally, serine protease with a variety of targets, including extracellular matrix proteins and proteoglycans. Through cleavage of proteoglycans, may release soluble FGF-glycosaminoglycan complexes that promote the range and intensity of FGF signals in the extracellular space. Regulates the availability of insulin-like growth factors (IGFs) by cleaving IGF-binding proteins. Inhibits signaling mediated by TGF-beta family members. Consequently, may regulate many physiological processes. Intracellularly, degrades TSC2, leading to the activation of TSC2 downstream targets. This chain is Serine protease HTRA1A (htra1a), found in Danio rerio (Zebrafish).